The chain runs to 331 residues: tRNA-cytidine(32) 2-sulfurtransferase (331 aa).

Positions 71–76 match the PP-loop motif motif; that stretch reads SGGKDS. Cysteine 146, cysteine 149, and cysteine 237 together coordinate [4Fe-4S] cluster.

The protein belongs to the TtcA family. Homodimer. It depends on Mg(2+) as a cofactor. The cofactor is [4Fe-4S] cluster.

The protein localises to the cytoplasm. It carries out the reaction cytidine(32) in tRNA + S-sulfanyl-L-cysteinyl-[cysteine desulfurase] + AH2 + ATP = 2-thiocytidine(32) in tRNA + L-cysteinyl-[cysteine desulfurase] + A + AMP + diphosphate + H(+). It participates in tRNA modification. Catalyzes the ATP-dependent 2-thiolation of cytidine in position 32 of tRNA, to form 2-thiocytidine (s(2)C32). The sulfur atoms are provided by the cysteine/cysteine desulfurase (IscS) system. The polypeptide is tRNA-cytidine(32) 2-sulfurtransferase (Burkholderia multivorans (strain ATCC 17616 / 249)).